The chain runs to 313 residues: Beta-ketoacyl-[acyl-carrier-protein] synthase III (313 aa).

Active-site residues include C112 and H238. Positions 239 to 243 (QANIR) are ACP-binding. The active site involves N268.

This sequence belongs to the thiolase-like superfamily. FabH family. Homodimer.

The protein localises to the cytoplasm. The enzyme catalyses malonyl-[ACP] + acetyl-CoA + H(+) = 3-oxobutanoyl-[ACP] + CO2 + CoA. It participates in lipid metabolism; fatty acid biosynthesis. Catalyzes the condensation reaction of fatty acid synthesis by the addition to an acyl acceptor of two carbons from malonyl-ACP. Catalyzes the first condensation reaction which initiates fatty acid synthesis and may therefore play a role in governing the total rate of fatty acid production. Possesses both acetoacetyl-ACP synthase and acetyl transacylase activities. Its substrate specificity determines the biosynthesis of branched-chain and/or straight-chain of fatty acids. The sequence is that of Beta-ketoacyl-[acyl-carrier-protein] synthase III from Staphylococcus aureus (strain COL).